Reading from the N-terminus, the 258-residue chain is Ubiquinone/menaquinone biosynthesis C-methyltransferase UbiE (258 aa).

Residues 1-20 (MSESRTSADGGMETSYGFRE) are disordered. S-adenosyl-L-methionine-binding positions include T81, D102, and 130–131 (NA).

This sequence belongs to the class I-like SAM-binding methyltransferase superfamily. MenG/UbiE family.

It carries out the reaction a 2-demethylmenaquinol + S-adenosyl-L-methionine = a menaquinol + S-adenosyl-L-homocysteine + H(+). The enzyme catalyses a 2-methoxy-6-(all-trans-polyprenyl)benzene-1,4-diol + S-adenosyl-L-methionine = a 5-methoxy-2-methyl-3-(all-trans-polyprenyl)benzene-1,4-diol + S-adenosyl-L-homocysteine + H(+). It functions in the pathway quinol/quinone metabolism; menaquinone biosynthesis; menaquinol from 1,4-dihydroxy-2-naphthoate: step 2/2. Its pathway is cofactor biosynthesis; ubiquinone biosynthesis. Its function is as follows. Methyltransferase required for the conversion of demethylmenaquinol (DMKH2) to menaquinol (MKH2) and the conversion of 2-polyprenyl-6-methoxy-1,4-benzoquinol (DDMQH2) to 2-polyprenyl-3-methyl-6-methoxy-1,4-benzoquinol (DMQH2). The chain is Ubiquinone/menaquinone biosynthesis C-methyltransferase UbiE from Rhizobium etli (strain ATCC 51251 / DSM 11541 / JCM 21823 / NBRC 15573 / CFN 42).